The chain runs to 132 residues: MSKVYDTLGNLKVGSFIVIDGEPCRIVEMSRAKTGKHGSAKANVVAIGLFSKAKKTLVAPVDTQVEVPVIEKHVGQIIADMGTMYQVMDMETYETFEVEKDSIEEDIRNKLGVGSEVEYWVVMGKRLIIRPR.

Residue Lys-36 is modified to Hypusine.

This sequence belongs to the eIF-5A family.

The protein localises to the cytoplasm. Functions by promoting the formation of the first peptide bond. The polypeptide is Translation initiation factor 5A (eIF5A) (Desulfurococcus amylolyticus (strain DSM 18924 / JCM 16383 / VKM B-2413 / 1221n) (Desulfurococcus kamchatkensis)).